The chain runs to 928 residues: Isoleucine--tRNA ligase (928 aa).

The 'HIGH' region motif lies at 57 to 67 (PFANGNIHMGH). Residue glutamate 552 coordinates L-isoleucyl-5'-AMP. The 'KMSKS' region signature appears at 593-597 (KMSKS). Lysine 596 contacts ATP. Zn(2+) contacts are provided by cysteine 887, cysteine 890, cysteine 907, and cysteine 910.

It belongs to the class-I aminoacyl-tRNA synthetase family. IleS type 1 subfamily. As to quaternary structure, monomer. Requires Zn(2+) as cofactor.

It is found in the cytoplasm. The enzyme catalyses tRNA(Ile) + L-isoleucine + ATP = L-isoleucyl-tRNA(Ile) + AMP + diphosphate. Its function is as follows. Catalyzes the attachment of isoleucine to tRNA(Ile). As IleRS can inadvertently accommodate and process structurally similar amino acids such as valine, to avoid such errors it has two additional distinct tRNA(Ile)-dependent editing activities. One activity is designated as 'pretransfer' editing and involves the hydrolysis of activated Val-AMP. The other activity is designated 'posttransfer' editing and involves deacylation of mischarged Val-tRNA(Ile). In Lacticaseibacillus casei (strain BL23) (Lactobacillus casei), this protein is Isoleucine--tRNA ligase.